The chain runs to 142 residues: Hemoglobin subunit pi (142 aa).

The region spanning 2–142 (ALTQAEKAAV…ISSVLTEKYR (141 aa)) is the Globin domain. Heme b is bound by residues His59 and His88.

This sequence belongs to the globin family.

The pi' chain is the counterpart of the alpha chain in the major early embryonic hemoglobin P. This is Hemoglobin subunit pi from Gallus gallus (Chicken).